Reading from the N-terminus, the 138-residue chain is MSWRRVILLSSLLALVLLCMLQEGTSASVGSRQAAAEGVQEGVKQKIFMQESDASNFLKRRGKRSPKSRDEVNAENRQRLRDDELRREYYEEQRNEFENFVEEQRDEQEERTREAVEQWRQWHYDGLYPSYLYNRQNI.

Residues 1–27 (MSWRRVILLSSLLALVLLCMLQEGTSA) form the signal peptide. Positions 28 to 64 (SVGSRQAAAEGVQEGVKQKIFMQESDASNFLKRRGKR) are cleaved as a propeptide — ucma-N. The tract at residues 58-78 (LKRRGKRSPKSRDEVNAENRQ) is disordered. Residues 67-78 (KSRDEVNAENRQ) show a composition bias toward basic and acidic residues. Residues 78 to 122 (QRLRDDELRREYYEEQRNEFENFVEEQRDEQEERTREAVEQWRQW) adopt a coiled-coil conformation.

Belongs to the UCMA family. Proteolytically cleaved by a furin-like convertase to generate a persistent C-terminal fragment found in almost the entire cartilage matrix, and affecting osteoblast differentiation. Post-translationally, sulfated on one or two tyrosine residues within the tryptic peptide 121-135. In terms of tissue distribution, predominantly expressed in resting chondrocytes.

The protein resides in the secreted. Its subcellular location is the extracellular space. It is found in the extracellular matrix. It localises to the golgi apparatus. The protein localises to the cytoplasm. The protein resides in the cytoskeleton. Its function is as follows. May be involved in the negative control of osteogenic differentiation of osteochondrogenic precursor cells in peripheral zones of fetal cartilage and at the cartilage-bone interface. This Mus musculus (Mouse) protein is Unique cartilage matrix-associated protein (Ucma).